We begin with the raw amino-acid sequence, 209 residues long: Small ribosomal subunit protein uS4 (209 aa).

The disordered stretch occupies residues 23–46; that stretch reads SRNPLLKKPHPPGQHGMQRKKKSD. An S4 RNA-binding domain is found at 93-153; sequence CRLDNMVYRM…EKSKRLQSVK (61 aa).

It belongs to the universal ribosomal protein uS4 family. As to quaternary structure, part of the 30S ribosomal subunit. Contacts protein S5. The interaction surface between S4 and S5 is involved in control of translational fidelity.

In terms of biological role, one of the primary rRNA binding proteins, it binds directly to 16S rRNA where it nucleates assembly of the body of the 30S subunit. Its function is as follows. With S5 and S12 plays an important role in translational accuracy. The polypeptide is Small ribosomal subunit protein uS4 (Chlamydia pneumoniae (Chlamydophila pneumoniae)).